A 244-amino-acid chain; its full sequence is NAD(P)H-quinone oxidoreductase subunit K (244 aa).

[4Fe-4S] cluster-binding residues include cysteine 60, cysteine 61, cysteine 125, and cysteine 156.

It belongs to the complex I 20 kDa subunit family. As to quaternary structure, NDH-1 can be composed of about 15 different subunits; different subcomplexes with different compositions have been identified which probably have different functions. The cofactor is [4Fe-4S] cluster.

The protein localises to the cellular thylakoid membrane. It catalyses the reaction a plastoquinone + NADH + (n+1) H(+)(in) = a plastoquinol + NAD(+) + n H(+)(out). The catalysed reaction is a plastoquinone + NADPH + (n+1) H(+)(in) = a plastoquinol + NADP(+) + n H(+)(out). Its function is as follows. NDH-1 shuttles electrons from an unknown electron donor, via FMN and iron-sulfur (Fe-S) centers, to quinones in the respiratory and/or the photosynthetic chain. The immediate electron acceptor for the enzyme in this species is believed to be plastoquinone. Couples the redox reaction to proton translocation, and thus conserves the redox energy in a proton gradient. Cyanobacterial NDH-1 also plays a role in inorganic carbon-concentration. The protein is NAD(P)H-quinone oxidoreductase subunit K of Synechococcus sp. (strain CC9902).